Reading from the N-terminus, the 369-residue chain is Secondary metabolism regulator laeA (369 aa).

The disordered stretch occupies residues 1 to 37 (MFGNGQTGQRLPAMASPPHDSYYSQSLASSRSRNNSD). Low complexity predominate over residues 20-37 (DSYYSQSLASSRSRNNSD).

This sequence belongs to the methyltransferase superfamily. LaeA methyltransferase family. As to quaternary structure, component of the heterotrimeric velvet complex composed of laeA, veA and velB; VeA acting as a bridging protein between laeA and velB. Interacts directly with veA.

The protein resides in the nucleus. It carries out the reaction L-methionyl-[protein] + S-adenosyl-L-methionine = S-methyl-L-methionyl-[protein] + S-adenosyl-L-homocysteine. Methyltransferase that performs automethylation. No other methyl-accepting substrate has been identified yet. Component of the velvet transcription factor complex that acts as a global regulator for secondary metabolite gene expression. Required for aflR expression and subsequent aflatoxin production. Negatively regulates veA expression. Controls conidiophore and conidial development. Required for hydrophobin production which plays a role in cell surface hydrophobicity and host defense escape. This chain is Secondary metabolism regulator laeA, found in Aspergillus flavus (strain ATCC 200026 / FGSC A1120 / IAM 13836 / NRRL 3357 / JCM 12722 / SRRC 167).